A 1693-amino-acid polypeptide reads, in one-letter code: Non-structural polyprotein pORF1 (1693 aa).

Positions 56 to 240 (VFRPEVFWNQ…HDVSNLRSWI (185 aa)) constitute an Alphavirus-like MT domain. The methyltransferase stretch occupies residues 60–240 (EVFWNQPIQR…HDVSNLRSWI (181 aa)). The segment at 241 to 439 (RTTKVTGDHP…FYAQCRRWLS (199 aa)) is Y-domain. Cys-434 and Cys-481 are disulfide-bonded. Residues 442-509 (FHLDPRVLVF…ESYEGSDVDP (68 aa)) form a putative protease region. The interval 510–691 (AESAISDISG…FSPGHVWESA (182 aa)) is zinc-binding. Residues His-671, Glu-673, and His-686 each coordinate Zn(2+). The hinge stretch occupies residues 712 to 778 (SSPTRPDLGF…AITHQTARHR (67 aa)). The tract at residues 716 to 769 (RPDLGFMSEPPIPSRAATPTLAAPLPPLAPDPSPPSSAPALDEPASAATSGVPA) is disordered. Positions 739 to 752 (PLPPLAPDPSPPSS) are enriched in pro residues. The segment covering 753–763 (APALDEPASAA) has biased composition (low complexity). The Macro domain occupies 775 to 921 (ARHRRLLFTY…LYLPELAARW (147 aa)). The segment at 785–942 (PDGSKVFAGS…TITEDAARTA (158 aa)) is X-domain. The 149-residue stretch at 934 to 1082 (ITEDAARTAN…RPDLAPTSWW (149 aa)) folds into the (+)RNA virus helicase ATP-binding domain. The interval 960–1204 (GCRVTPGVVQ…ISDAIVNNFF (245 aa)) is NTPase/helicase. An ATP-binding site is contributed by 975-982 (GVPGSGKS). Residues 1083–1216 (HVTHRCPADV…GGEIGHQRPS (134 aa)) form the (+)RNA virus helicase C-terminal domain. The segment at 1207-1693 (GGEIGHQRPS…LTNSILCRVE (487 aa)) is RNA-directed RNA polymerase. The region spanning 1454–1565 (SMVFENDFSE…LCSEYRQSPG (112 aa)) is the RdRp catalytic domain.

The protein belongs to the hepevirus non-structural polyprotein family. The protease domain interacts with host EIF2AK4 (via C-terminus); this interaction inhibits dimerization of EIF2AK4 and prevents EIF2AK4-mediated phosphorylation of host EIF2A. Requires Mg(2+) as cofactor. ORF1 polyprotein does not seem to be processed into distinct enzymatic domains by a viral protease belonging to ORF1, but could be processed by a host serine protease like thrombin.

It is found in the host cytoplasm. Its subcellular location is the host perinuclear region. The enzyme catalyses RNA(n) + a ribonucleoside 5'-triphosphate = RNA(n+1) + diphosphate. It carries out the reaction GTP + S-adenosyl-L-methionine = N(7)-methyl-GTP + S-adenosyl-L-homocysteine. With respect to regulation, putative protease: Inhibited by chymostatin. Methyltransferase: Displays a capping enzyme activity. This function is necessary since all viral RNAs are synthesized in the cytoplasm, and host capping enzymes are restricted to the nucleus. The enzymatic reaction involves a covalent link between 7-methyl-GMP and the methyltransferase, whereas eukaryotic capping enzymes form a covalent complex only with GMP. Methyltransferase catalyzes transfer of a methyl group from S-adenosylmethionine to GTP and GDP to yield m(7)GTP or m(7)GDP. GDP is a better substrate than GTP. This enzyme also displays guanylyltransferase activity to form a covalent complex, methyltransferase-m(7)GMP, from which 7-methyl-GMP is transferred to the mRNA to create the cap structure. Functionally, Y-domain: Indispensable for virus replication. In terms of biological role, putative protease: The putative protease domain although necessary for replication of the virus may not be a protease but rather a structural Zn(2+)-binding domain. Inhibits induction of IFN-beta by MDA5 and RIG-I pathways and down-regulates the expression of MDA5. Its function is as follows. NTPase/helicase: Multi-functional protein that exhibits NTPase and RNA unwinding activities. Hydrolyzes all NTPs efficiently and unwinds RNA duplexes containing 5' overhangs. Possesses a sequence independent RNA-5'-triphosphatase (RTPase) activity suggestive of its role in forming viral cap structure. Also participates in viral genome replication, RNA translocation and genome packaging/unpackaging. RNA-directed RNA polymerase: Plays an essential role in the virus replication. Binds to the 3'-end of the genomic RNA to initiate viral replication. This is Non-structural polyprotein pORF1 from Bandicota bengalensis (lesser bandicoot rat).